The chain runs to 996 residues: Alanine--tRNA ligase, chloroplastic/mitochondrial (996 aa).

Positions 677, 681, 779, and 783 each coordinate Zn(2+).

This sequence belongs to the class-II aminoacyl-tRNA synthetase family. Monomer. The cofactor is Zn(2+).

It localises to the plastid. The protein localises to the chloroplast. Its subcellular location is the mitochondrion. It catalyses the reaction tRNA(Ala) + L-alanine + ATP = L-alanyl-tRNA(Ala) + AMP + diphosphate. Its function is as follows. Catalyzes the attachment of alanine to tRNA(Ala) in a two-step reaction: alanine is first activated by ATP to form Ala-AMP and then transferred to the acceptor end of tRNA(Ala). Also edits incorrectly charged tRNA(Ala) via its editing domain. This is Alanine--tRNA ligase, chloroplastic/mitochondrial from Oryza sativa subsp. japonica (Rice).